Consider the following 39-residue polypeptide: Photosystem II reaction center protein J (39 aa).

Residues 7–27 traverse the membrane as a helical segment; the sequence is IPLWIVAVVVGLGVVTVVGLF.

This sequence belongs to the PsbJ family. In terms of assembly, PSII is composed of 1 copy each of membrane proteins PsbA, PsbB, PsbC, PsbD, PsbE, PsbF, PsbH, PsbI, PsbJ, PsbK, PsbL, PsbM, PsbT, PsbX, PsbY, PsbZ, Psb30/Ycf12, peripheral proteins PsbO, CyanoQ (PsbQ), PsbU, PsbV and a large number of cofactors. It forms dimeric complexes.

The protein resides in the cellular thylakoid membrane. Functionally, one of the components of the core complex of photosystem II (PSII). PSII is a light-driven water:plastoquinone oxidoreductase that uses light energy to abstract electrons from H(2)O, generating O(2) and a proton gradient subsequently used for ATP formation. It consists of a core antenna complex that captures photons, and an electron transfer chain that converts photonic excitation into a charge separation. In Synechococcus sp. (strain JA-3-3Ab) (Cyanobacteria bacterium Yellowstone A-Prime), this protein is Photosystem II reaction center protein J.